Reading from the N-terminus, the 686-residue chain is MMQESGTETKSNGSAIQNGASGGNHLLECSLREVRSNGETPSVEIGAADLTHLQQQQALQVARQLLLQQQQQQQQQQQQQQQQQVSGLKSPKRNDKQPALQVPVSVAMMTPQVITPQQMQQILQQQVLTPQQLQVLLQQQQALMLQQQQLQEFYKKQQEQLQLQLLQQQHAGKQPKEPQQQQVATQQLAFQQQLLQMQQLQQQHLLTLQRQGLLTIQPGQPTLPLQPLAQGMIPTELQQLWKEVTSSHTAEEAASNNHSSLDLSTTCVSSSAPSKTSLIINPHASTNGQLSVHTPKRESLSHEEHSHSHPLYGHGVCKWPGCEAVCEDFQSFLKHLNSEHALDDRSTAQCRVQMQVVQQLELQLAKDKERLQAMMTHLHVKSTEPKATPQPLNLVSSVTLSKTASEASPQSLPHTPTTPTAPITPVTQGPSVITTTSMHNVGPIRRRYSDKYNVPISSADIAQNQEFYKNAEVRPPFTYASLIRQAILESPEKQLTLNEIYNWFTRMFAYFRRNAATWKNAVRHNLSLHKCFVRVENVKGAVWTVDEQEFQKRRPQKISGNPSLIKNIQTSHTYCTPLNAALQASMAENSIPLYTTASMGNPTLGNLANVMREELNGAMEHTNSNGSDSSPGRSPMQAMHPVHVKEEPLDPDENEGPLSLVTTANHSPDFDHDRDYEDEPVNEDIE.

Polar residues-rich tracts occupy residues 1–19 (MMQE…IQNG) and 279–292 (IINP…QLSV). 2 disordered regions span residues 1 to 23 (MMQE…ASGG) and 279 to 306 (IINP…EEHS). Positions 295–306 (PKRESLSHEEHS) are enriched in basic and acidic residues. The C2H2-type zinc-finger motif lies at 315–340 (GVCKWPGCEAVCEDFQSFLKHLNSEH). Residues 357–378 (VQQLELQLAKDKERLQAMMTHL) form a leucine-zipper region. The CTBP1-binding stretch occupies residues 391–395 (PLNLV). Residues 403-412 (TASEASPQSL) show a composition bias toward polar residues. Positions 403-440 (TASEASPQSLPHTPTTPTAPITPVTQGPSVITTTSMHN) are disordered. The span at 413-427 (PHTPTTPTAPITPVT) shows a compositional bias: low complexity. Residues 428–439 (QGPSVITTTSMH) are compositionally biased toward polar residues. Positions 474 to 564 (RPPFTYASLI…PQKISGNPSL (91 aa)) form a DNA-binding region, fork-head. The tract at residues 619–686 (MEHTNSNGSD…EDEPVNEDIE (68 aa)) is disordered. Residues 621-632 (HTNSNGSDSSPG) are compositionally biased toward polar residues. Residues 676-686 (YEDEPVNEDIE) are compositionally biased toward acidic residues.

It is found in the nucleus. Functionally, transcriptional repressor. In Gallus gallus (Chicken), this protein is Forkhead box protein P1 (FOXP1).